A 362-amino-acid chain; its full sequence is Acyl-CoA-binding domain-containing protein 3 (362 aa).

The first 22 residues, 1-22, serve as a signal peptide directing secretion; it reads MEVFLEMLLTAVVALLFSFLLA. Disordered stretches follow at residues 132–151 and 193–214; these read QDEQ…SPEN and VEKS…EKTE. Residues 192–221 are a coiled coil; it reads RVEKSSNMVEESDAEAENEEKTELTIEEDD. The region spanning 231-318 is the ACB domain; the sequence is LEKAFAAAVN…VSKEIPGLTK (88 aa). Residues 260–264, K286, and Y305 each bind an acyl-CoA; that span reads FGLHK. The tract at residues 329–362 is disordered; that stretch reads METSVGLPPNSGSLEDPTNLVTTGVDESSKNGIP.

It belongs to the ACBP family. Expressed in roots, stems, leaves, flowers and siliques.

The protein localises to the secreted. It is found in the extracellular space. Binds medium- and long-chain acyl-CoA esters with very high affinity. Can interact in vitro with arachidonyl-CoA, barely with oleoyl-CoA, but not with palmitoyl-CoA. The sequence is that of Acyl-CoA-binding domain-containing protein 3 (ACBP3) from Arabidopsis thaliana (Mouse-ear cress).